The chain runs to 329 residues: GTP 3',8-cyclase (329 aa).

The region spanning 8–234 is the Radical SAM core domain; the sequence is AFARKFYYLR…QQRARSDGPA (227 aa). Arg-17 is a binding site for GTP. Residues Cys-24 and Cys-28 each coordinate [4Fe-4S] cluster. S-adenosyl-L-methionine is bound at residue Tyr-30. Cys-31 provides a ligand contact to [4Fe-4S] cluster. GTP is bound at residue Arg-68. An S-adenosyl-L-methionine-binding site is contributed by Gly-72. Thr-99 contacts GTP. An S-adenosyl-L-methionine-binding site is contributed by Ser-123. Lys-160 serves as a coordination point for GTP. An S-adenosyl-L-methionine-binding site is contributed by Met-194. Cys-257 and Cys-260 together coordinate [4Fe-4S] cluster. Residue 262-264 participates in GTP binding; sequence RLR. Cys-274 serves as a coordination point for [4Fe-4S] cluster.

The protein belongs to the radical SAM superfamily. MoaA family. Monomer and homodimer. [4Fe-4S] cluster serves as cofactor.

The catalysed reaction is GTP + AH2 + S-adenosyl-L-methionine = (8S)-3',8-cyclo-7,8-dihydroguanosine 5'-triphosphate + 5'-deoxyadenosine + L-methionine + A + H(+). The protein operates within cofactor biosynthesis; molybdopterin biosynthesis. Catalyzes the cyclization of GTP to (8S)-3',8-cyclo-7,8-dihydroguanosine 5'-triphosphate. In Pectobacterium atrosepticum (strain SCRI 1043 / ATCC BAA-672) (Erwinia carotovora subsp. atroseptica), this protein is GTP 3',8-cyclase.